The following is a 388-amino-acid chain: Alpha-2A adrenergic receptor (388 aa).

Topologically, residues 1–22 (MICGANATNGTNATKEYTLLVA) are extracellular. Asparagine 6, asparagine 9, and asparagine 12 each carry an N-linked (GlcNAc...) asparagine glycan. A helical membrane pass occupies residues 23–48 (LPLSIAVGLLILLIIFGNVLVIIAVF). Topologically, residues 49-59 (TSRALRAPQNL) are cytoplasmic. Residues 60-85 (FLVSLASADILVATLVMPFSLANELM) form a helical membrane-spanning segment. Residues 86–95 (GMWTFGGVWC) are Extracellular-facing. An intrachain disulfide couples cysteine 95 to cysteine 169. Residues 96-118 (EIYLALDVLFCTASITHLCAISL) form a helical membrane-spanning segment. The Cytoplasmic portion of the chain corresponds to 119-138 (DRYWSITQAIEYNLKRTPQR). A helical membrane pass occupies residues 139–162 (IKRIIFIVWIIAAVISCPPLITMK). The Extracellular segment spans residues 163-173 (KSEGDICDINK). The chain crosses the membrane as a helical span at residues 174-198 (EKWYIVSSCIGSFFLPCIIMVLVYI). Over 199–311 (RIYQIAKKRT…RQNREKRFTF (113 aa)) the chain is Cytoplasmic. Residues 208-291 (TRAPPGDHRK…PGDGDKTEAC (84 aa)) form a disordered region. The segment covering 212–231 (PGDHRKNEVGKKENDPHEKL) has biased composition (basic and acidic residues). Residues 266 to 275 (LKKKSSKGKT) show a composition bias toward basic residues. A helical transmembrane segment spans residues 312–337 (VLAVVIGVFVICWFPFFFTYTFTAFC). The Extracellular segment spans residues 338 to 344 (DCCVPET). The chain crosses the membrane as a helical span at residues 345-368 (LFKFFFWFGYCNSSLNPIIYTIFN). At 369-388 (NDFRRSFKKILCRRDKRRVV) the chain is on the cytoplasmic side. Cysteine 380 carries S-palmitoyl cysteine lipidation.

The protein belongs to the G-protein coupled receptor 1 family. Adrenergic receptor subfamily. ADRA2A sub-subfamily.

Its subcellular location is the cell membrane. Functionally, alpha-2 adrenergic receptors mediate the catecholamine-induced inhibition of adenylate cyclase through the action of G proteins. The order of potency for this receptor is dexmedetomidine &gt; oxymetazoline = epinephrine &gt; norepinephrine. The chain is Alpha-2A adrenergic receptor from Danio rerio (Zebrafish).